Consider the following 131-residue polypeptide: Holo-[acyl-carrier-protein] synthase (131 aa).

The Mg(2+) site is built by aspartate 8 and glutamate 63.

It belongs to the P-Pant transferase superfamily. AcpS family. Mg(2+) is required as a cofactor.

The protein localises to the cytoplasm. It carries out the reaction apo-[ACP] + CoA = holo-[ACP] + adenosine 3',5'-bisphosphate + H(+). Transfers the 4'-phosphopantetheine moiety from coenzyme A to a Ser of acyl-carrier-protein. This is Holo-[acyl-carrier-protein] synthase from Shewanella piezotolerans (strain WP3 / JCM 13877).